The chain runs to 548 residues: Membrane protein insertase YidC (548 aa).

The helical transmembrane segment at 6–26 threads the bilayer; sequence NLLIIALLFVSFMIWQAWEQD. Positions 28–52 are disordered; that stretch reads NPQPQQQTTQTTTTAAGSAADQGVP. Residues 29–41 are compositionally biased toward low complexity; sequence PQPQQQTTQTTTT. The next 4 helical transmembrane spans lie at 345 to 365, 420 to 440, 458 to 478, and 499 to 519; these read KFIH…TFIV, LGGC…YYML, LSAQ…MFFI, and PVIF…YYIV.

Belongs to the OXA1/ALB3/YidC family. Type 1 subfamily. Interacts with the Sec translocase complex via SecD. Specifically interacts with transmembrane segments of nascent integral membrane proteins during membrane integration.

The protein resides in the cell inner membrane. Its function is as follows. Required for the insertion and/or proper folding and/or complex formation of integral membrane proteins into the membrane. Involved in integration of membrane proteins that insert both dependently and independently of the Sec translocase complex, as well as at least some lipoproteins. Aids folding of multispanning membrane proteins. This is Membrane protein insertase YidC from Klebsiella pneumoniae (strain 342).